The chain runs to 250 residues: Probable aquaporin TIP-type RB7-5A (250 aa).

The next 2 helical transmembrane spans lie at A20 to Y42 and G55 to I77. The NPA 1 motif lies at N83 to A85. Helical transmembrane passes span T97 to L119, L140 to A162, and I172 to G194. The NPA 2 signature appears at N197–A199. The helical transmembrane segment at W215 to I237 threads the bilayer.

It belongs to the MIP/aquaporin (TC 1.A.8) family. TIP (TC 1.A.8.10) subfamily. Roots.

It localises to the vacuole membrane. Channel protein in tonoplast. These proteins may allow the diffusion of amino acids and/or peptides from the vacuolar compartment to the cytoplasm. This chain is Probable aquaporin TIP-type RB7-5A, found in Nicotiana tabacum (Common tobacco).